Reading from the N-terminus, the 140-residue chain is Ribosome-binding factor A (140 aa).

Residues 121 to 140 (KTEQTSADDDADRLDSEDRS) are disordered.

It belongs to the RbfA family. In terms of assembly, monomer. Binds 30S ribosomal subunits, but not 50S ribosomal subunits or 70S ribosomes.

Its subcellular location is the cytoplasm. Functionally, one of several proteins that assist in the late maturation steps of the functional core of the 30S ribosomal subunit. Associates with free 30S ribosomal subunits (but not with 30S subunits that are part of 70S ribosomes or polysomes). Required for efficient processing of 16S rRNA. May interact with the 5'-terminal helix region of 16S rRNA. This Psychrobacter sp. (strain PRwf-1) protein is Ribosome-binding factor A.